A 411-amino-acid chain; its full sequence is Phosphopentomutase (411 aa).

Residues aspartate 14, aspartate 306, histidine 311, aspartate 347, histidine 348, and histidine 359 each coordinate Mn(2+).

This sequence belongs to the phosphopentomutase family. The cofactor is Mn(2+).

It is found in the cytoplasm. The catalysed reaction is 2-deoxy-alpha-D-ribose 1-phosphate = 2-deoxy-D-ribose 5-phosphate. The enzyme catalyses alpha-D-ribose 1-phosphate = D-ribose 5-phosphate. It participates in carbohydrate degradation; 2-deoxy-D-ribose 1-phosphate degradation; D-glyceraldehyde 3-phosphate and acetaldehyde from 2-deoxy-alpha-D-ribose 1-phosphate: step 1/2. In terms of biological role, isomerase that catalyzes the conversion of deoxy-ribose 1-phosphate (dRib-1-P) and ribose 1-phosphate (Rib-1-P) to deoxy-ribose 5-phosphate (dRib-5-P) and ribose 5-phosphate (Rib-5-P), respectively. In Lactococcus lactis subsp. cremoris (strain MG1363), this protein is Phosphopentomutase.